The sequence spans 96 residues: Co-chaperonin GroES (96 aa).

This sequence belongs to the GroES chaperonin family. As to quaternary structure, heptamer of 7 subunits arranged in a ring. Interacts with the chaperonin GroEL.

The protein localises to the cytoplasm. Functionally, together with the chaperonin GroEL, plays an essential role in assisting protein folding. The GroEL-GroES system forms a nano-cage that allows encapsulation of the non-native substrate proteins and provides a physical environment optimized to promote and accelerate protein folding. GroES binds to the apical surface of the GroEL ring, thereby capping the opening of the GroEL channel. The chain is Co-chaperonin GroES from Haemophilus influenzae (strain PittEE).